We begin with the raw amino-acid sequence, 359 residues long: Phosphate acyltransferase (359 aa).

Residues 335 to 359 (SGAGGAATGSPETDAPNPHPDSRAA) form a disordered region.

The protein belongs to the PlsX family. In terms of assembly, homodimer. Probably interacts with PlsY.

It localises to the cytoplasm. The enzyme catalyses a fatty acyl-[ACP] + phosphate = an acyl phosphate + holo-[ACP]. It functions in the pathway lipid metabolism; phospholipid metabolism. Catalyzes the reversible formation of acyl-phosphate (acyl-PO(4)) from acyl-[acyl-carrier-protein] (acyl-ACP). This enzyme utilizes acyl-ACP as fatty acyl donor, but not acyl-CoA. The chain is Phosphate acyltransferase from Cupriavidus metallidurans (strain ATCC 43123 / DSM 2839 / NBRC 102507 / CH34) (Ralstonia metallidurans).